Consider the following 936-residue polypeptide: Probable outer membrane protein pmp7 (936 aa).

The signal sequence occupies residues 1–23 (MKSSVSWLFFSSIPLFSSLSIVA). Positions 636–936 (GEPFERELWL…NTNLGSKFCF (301 aa)) constitute an Autotransporter domain.

The protein belongs to the PMP outer membrane protein family.

It is found in the secreted. The protein resides in the cell wall. The protein localises to the cell outer membrane. The sequence is that of Probable outer membrane protein pmp7 (pmp7) from Chlamydia pneumoniae (Chlamydophila pneumoniae).